The sequence spans 155 residues: Aspartate carbamoyltransferase regulatory chain (155 aa).

Zn(2+)-binding residues include cysteine 112, cysteine 117, cysteine 138, and cysteine 141.

This sequence belongs to the PyrI family. As to quaternary structure, contains catalytic and regulatory chains. Zn(2+) is required as a cofactor.

Involved in allosteric regulation of aspartate carbamoyltransferase. This is Aspartate carbamoyltransferase regulatory chain from Methanocorpusculum labreanum (strain ATCC 43576 / DSM 4855 / Z).